Here is a 218-residue protein sequence, read N- to C-terminus: Deoxyribose-phosphate aldolase (218 aa).

Catalysis depends on aspartate 92, which acts as the Proton donor/acceptor. Lysine 155 serves as the catalytic Schiff-base intermediate with acetaldehyde. The active-site Proton donor/acceptor is the lysine 184.

It belongs to the DeoC/FbaB aldolase family. DeoC type 1 subfamily.

The protein resides in the cytoplasm. The enzyme catalyses 2-deoxy-D-ribose 5-phosphate = D-glyceraldehyde 3-phosphate + acetaldehyde. Its pathway is carbohydrate degradation; 2-deoxy-D-ribose 1-phosphate degradation; D-glyceraldehyde 3-phosphate and acetaldehyde from 2-deoxy-alpha-D-ribose 1-phosphate: step 2/2. In terms of biological role, catalyzes a reversible aldol reaction between acetaldehyde and D-glyceraldehyde 3-phosphate to generate 2-deoxy-D-ribose 5-phosphate. This is Deoxyribose-phosphate aldolase from Clostridium kluyveri (strain NBRC 12016).